The chain runs to 435 residues: Transcription factor tau 55 kDa subunit (435 aa).

The tract at residues 362-417 (GLLSPTEENETTNAGQSKGSSTANDPNIQIQEEDVGLPDSTNTSRDHTGDKEEVQS) is disordered. Position 365 is a phosphoserine (S365). Positions 372–391 (TTNAGQSKGSSTANDPNIQI) are enriched in polar residues. Over residues 405-417 (SRDHTGDKEEVQS) the composition is skewed to basic and acidic residues.

Component of the TFIIIC complex composed of TFC1, TFC3, TFC4, TFC6, TFC7 and TFC8. The subunits are organized in two globular domains, tauA and tauB, connected by a proteolysis-sensitive and flexible linker.

It localises to the nucleus. Functionally, TFIIIC mediates tRNA and 5S RNA gene activation by binding to intragenic promoter elements. Upstream of the transcription start site, TFIIIC assembles the initiation complex TFIIIB-TFIIIC-tDNA, which is sufficient for RNA polymerase III recruitment and function. Part of the tauA domain of TFIIIC that binds boxA DNA promoter sites of tRNA and similar genes. The sequence is that of Transcription factor tau 55 kDa subunit (TFC7) from Saccharomyces cerevisiae (strain ATCC 204508 / S288c) (Baker's yeast).